The following is a 193-amino-acid chain: Acyl-homoserine-lactone synthase (193 aa).

This sequence belongs to the autoinducer synthase family.

The catalysed reaction is a fatty acyl-[ACP] + S-adenosyl-L-methionine = an N-acyl-L-homoserine lactone + S-methyl-5'-thioadenosine + holo-[ACP] + H(+). Functionally, required for the synthesis of OHHL (N-(3-oxohexanoyl)-L-homoserine lactone) also known as VAI or N-(beta-ketocaproyl)homoserine lactone or 3-oxo-N-(tetrahydro-2-oxo-3-furanyl)-hexanamide, an autoinducer molecule which binds to LuxR and thus acts in bioluminescence regulation. In Aliivibrio fischeri (Vibrio fischeri), this protein is Acyl-homoserine-lactone synthase (luxI).